The following is a 367-amino-acid chain: Multifunctional tryptophan biosynthesis protein (367 aa).

A Glutamine amidotransferase type-1 domain is found at Asn-7–Glu-201. Residue Gly-58–Gly-60 participates in L-glutamine binding. The active-site Nucleophile; for GATase activity is Cys-86. Residues Gln-90 and Ser-136–Leu-137 contribute to the L-glutamine site. Active-site for GATase activity residues include His-175 and Glu-177. Positions Arg-209–Ser-367 are indole-3-glycerol phosphate synthase.

As to quaternary structure, tetramer of two components I and two components II.

The enzyme catalyses chorismate + L-glutamine = anthranilate + pyruvate + L-glutamate + H(+). It carries out the reaction 1-(2-carboxyphenylamino)-1-deoxy-D-ribulose 5-phosphate + H(+) = (1S,2R)-1-C-(indol-3-yl)glycerol 3-phosphate + CO2 + H2O. It participates in amino-acid biosynthesis; L-tryptophan biosynthesis; L-tryptophan from chorismate: step 1/5. The protein operates within amino-acid biosynthesis; L-tryptophan biosynthesis; L-tryptophan from chorismate: step 4/5. The polypeptide is Multifunctional tryptophan biosynthesis protein (Pichia angusta (Yeast)).